The sequence spans 180 residues: Hypoxanthine-guanine phosphoribosyltransferase (180 aa).

Diphosphate is bound by residues lysine 43 and glycine 44. Positions 99 and 100 each coordinate Mg(2+). Aspartate 103 functions as the Proton acceptor in the catalytic mechanism. GMP-binding positions include lysine 131, 152–153, and aspartate 159; that span reads FI. Arginine 165 provides a ligand contact to diphosphate.

It belongs to the purine/pyrimidine phosphoribosyltransferase family. Mg(2+) serves as cofactor.

It is found in the cytoplasm. The catalysed reaction is IMP + diphosphate = hypoxanthine + 5-phospho-alpha-D-ribose 1-diphosphate. It catalyses the reaction GMP + diphosphate = guanine + 5-phospho-alpha-D-ribose 1-diphosphate. It functions in the pathway purine metabolism; IMP biosynthesis via salvage pathway; IMP from hypoxanthine: step 1/1. It participates in purine metabolism; GMP biosynthesis via salvage pathway; GMP from guanine: step 1/1. In terms of biological role, purine salvage pathway enzyme that catalyzes the transfer of the ribosyl-5-phosphate group from 5-phospho-alpha-D-ribose 1-diphosphate (PRPP) to the N9 position of the 6-oxopurines hypoxanthine and guanine to form the corresponding ribonucleotides IMP (inosine 5'-monophosphate) and GMP (guanosine 5'-monophosphate), with the release of PPi. The chain is Hypoxanthine-guanine phosphoribosyltransferase (hpt) from Streptococcus agalactiae serotype III (strain NEM316).